We begin with the raw amino-acid sequence, 323 residues long: SPbeta prophage-derived uncharacterized protein YorG (323 aa).

Positions 222-272 (TAENLEKAIIEAVERQEQAEGIVAVTYEEQKQNNASEELDFNSLMDQIKEI) form a coiled coil.

In Bacillus subtilis (strain 168), this protein is SPbeta prophage-derived uncharacterized protein YorG (yorG).